We begin with the raw amino-acid sequence, 446 residues long: B3 domain-containing protein REM12 (446 aa).

The segment at Met-1–Glu-46 is disordered. 2 DNA-binding regions (TF-B3) span residues Cys-56 to Thr-153 and Phe-193 to Gln-289. Positions Ser-295–Ser-334 are disordered. The TF-B3 3 DNA-binding region spans Tyr-341–Asn-435.

Its subcellular location is the nucleus. The protein is B3 domain-containing protein REM12 (REM12) of Arabidopsis thaliana (Mouse-ear cress).